We begin with the raw amino-acid sequence, 176 residues long: Glutamyl-tRNA(Gln) amidotransferase subunit F, mitochondrial (176 aa).

The protein belongs to the GatF family. In terms of assembly, subunit of the heterotrimeric GatFAB amidotransferase (AdT) complex, composed of A, B and F subunits.

It localises to the mitochondrion inner membrane. It carries out the reaction L-glutamyl-tRNA(Gln) + L-glutamine + ATP + H2O = L-glutaminyl-tRNA(Gln) + L-glutamate + ADP + phosphate + H(+). In terms of biological role, allows the formation of correctly charged Gln-tRNA(Gln) through the transamidation of misacylated Glu-tRNA(Gln) in the mitochondria. The reaction takes place in the presence of glutamine and ATP through an activated gamma-phospho-Glu-tRNA(Gln). Required for proper protein synthesis within the mitochondrion. The chain is Glutamyl-tRNA(Gln) amidotransferase subunit F, mitochondrial from Yarrowia lipolytica (strain CLIB 122 / E 150) (Yeast).